A 361-amino-acid chain; its full sequence is Chorismate synthase (361 aa).

Residues Arg48 and Arg54 each contribute to the NADP(+) site. Residues 125-127 (RSS), 238-239 (NA), Gly278, 293-297 (KPTSS), and Arg319 each bind FMN.

It belongs to the chorismate synthase family. In terms of assembly, homotetramer. FMNH2 serves as cofactor.

The catalysed reaction is 5-O-(1-carboxyvinyl)-3-phosphoshikimate = chorismate + phosphate. It functions in the pathway metabolic intermediate biosynthesis; chorismate biosynthesis; chorismate from D-erythrose 4-phosphate and phosphoenolpyruvate: step 7/7. Its function is as follows. Catalyzes the anti-1,4-elimination of the C-3 phosphate and the C-6 proR hydrogen from 5-enolpyruvylshikimate-3-phosphate (EPSP) to yield chorismate, which is the branch point compound that serves as the starting substrate for the three terminal pathways of aromatic amino acid biosynthesis. This reaction introduces a second double bond into the aromatic ring system. The protein is Chorismate synthase of Shigella flexneri.